Reading from the N-terminus, the 631-residue chain is Occlusion-derived virus envelope protein E66 (631 aa).

This sequence belongs to the baculoviridae E66 family.

Its subcellular location is the virion membrane. Functionally, component of the polyhedra envelope. The protein is Occlusion-derived virus envelope protein E66 of Leucania separata nucleopolyhedrovirus (LsNPV).